A 305-amino-acid polypeptide reads, in one-letter code: Diacylglycerol kinase (305 aa).

In terms of domain architecture, DAGKc spans 1–132; it reads MRKRARIIYN…VDIGKMNSRY (132 aa). ATP contacts are provided by residues 10-14, Thr41, 67-73, and Thr94; these read NPTSG and GDGTLNE. Positions 213, 216, and 218 each coordinate Mg(2+). The Proton acceptor role is filled by Glu273.

It belongs to the diacylglycerol/lipid kinase family. As to quaternary structure, homodimer. It depends on Mg(2+) as a cofactor.

It carries out the reaction a 1,2-diacyl-sn-glycerol + ATP = a 1,2-diacyl-sn-glycero-3-phosphate + ADP + H(+). Catalyzes the phosphorylation of diacylglycerol (DAG) into phosphatidic acid. Is a key enzyme involved in the production of lipoteichoic acid by reintroducing DAG formed from the breakdown of membrane phospholipids into the phosphatidylglycerol biosynthetic pathway. This chain is Diacylglycerol kinase (dagK), found in Staphylococcus saprophyticus subsp. saprophyticus (strain ATCC 15305 / DSM 20229 / NCIMB 8711 / NCTC 7292 / S-41).